A 1192-amino-acid polypeptide reads, in one-letter code: Outer capsid protein VP2 (1192 aa).

The interval isoleucine 1112 to arginine 1192 is disordered. Positions proline 1140–threonine 1150 are enriched in low complexity. The span at asparagine 1159 to glutamine 1183 shows a compositional bias: polar residues.

The protein resides in the virion. The enzyme catalyses a 5'-end diphospho-ribonucleoside in mRNA + GTP + H(+) = a 5'-end (5'-triphosphoguanosine)-ribonucleoside in mRNA + diphosphate. The catalysed reaction is a 5'-end (5'-triphosphoguanosine)-ribonucleoside in mRNA + S-adenosyl-L-methionine = a 5'-end (N(7)-methyl 5'-triphosphoguanosine)-ribonucleoside in mRNA + S-adenosyl-L-homocysteine. Its function is as follows. Outer capsid protein involved in mRNA capping. Catalyzes the last 3 enzymatic activities for formation of the 5' cap structure on the viral plus-strand transcripts, namely the RNA guanylyltransferase, RNA-7N- and RNA-2'O-methyltransferase activities. The chain is Outer capsid protein VP2 (S2) from Rice ragged stunt virus (isolate Thailand) (RRSV).